The following is a 213-amino-acid chain: Octanoyltransferase (213 aa).

Positions 32–207 (ENSHDEIWLV…NILALLNNPP (176 aa)) constitute a BPL/LPL catalytic domain. Residues 71–78 (RGGQVTYH), 138–140 (SLG), and 151–153 (GLA) each bind substrate. Cysteine 169 acts as the Acyl-thioester intermediate in catalysis.

This sequence belongs to the LipB family.

The protein localises to the cytoplasm. The catalysed reaction is octanoyl-[ACP] + L-lysyl-[protein] = N(6)-octanoyl-L-lysyl-[protein] + holo-[ACP] + H(+). It participates in protein modification; protein lipoylation via endogenous pathway; protein N(6)-(lipoyl)lysine from octanoyl-[acyl-carrier-protein]: step 1/2. Catalyzes the transfer of endogenously produced octanoic acid from octanoyl-acyl-carrier-protein onto the lipoyl domains of lipoate-dependent enzymes. Lipoyl-ACP can also act as a substrate although octanoyl-ACP is likely to be the physiological substrate. The protein is Octanoyltransferase of Salmonella typhi.